Consider the following 449-residue polypeptide: Mitochondrial distribution and morphology protein 10 (449 aa).

Disordered regions lie at residues 215-244 (GPSE…DEED) and 282-307 (DATP…GAPS). Over residues 285 to 301 (PPSFQLPSSSPTQPSLL) the composition is skewed to low complexity.

The protein belongs to the MDM10 family. Component of the ER-mitochondria encounter structure (ERMES) or MDM complex, composed of MMM1, MDM10, MDM12 and MDM34. Associates with the mitochondrial outer membrane sorting assembly machinery SAM(core) complex.

It is found in the mitochondrion outer membrane. In terms of biological role, component of the ERMES/MDM complex, which serves as a molecular tether to connect the endoplasmic reticulum and mitochondria. Components of this complex are involved in the control of mitochondrial shape and protein biogenesis and may function in phospholipid exchange. MDM10 is involved in the late assembly steps of the general translocase of the mitochondrial outer membrane (TOM complex). Functions in the TOM40-specific route of the assembly of outer membrane beta-barrel proteins, including the association of TOM40 with the receptor TOM22 and small TOM proteins. Can associate with the SAM(core) complex as well as the MDM12-MMM1 complex, both involved in late steps of the major beta-barrel assembly pathway, that is responsible for biogenesis of all outer membrane beta-barrel proteins. May act as a switch that shuttles between both complexes and channels precursor proteins into the TOM40-specific pathway. Plays a role in mitochondrial morphology and in the inheritance of mitochondria. This is Mitochondrial distribution and morphology protein 10 from Postia placenta (strain ATCC 44394 / Madison 698-R) (Brown rot fungus).